The sequence spans 50 residues: Protein PsbN (50 aa).

Residues 14-34 (VAVTILAVLLALTGFGLWTAF) traverse the membrane as a helical segment.

Belongs to the PsbN family.

It is found in the cellular thylakoid membrane. In terms of biological role, may play a role in photosystem I and II biogenesis. In Prochlorococcus marinus subsp. pastoris (strain CCMP1986 / NIES-2087 / MED4), this protein is Protein PsbN.